A 120-amino-acid polypeptide reads, in one-letter code: Anti-adapter protein IraM (120 aa).

The protein belongs to the IraM/RssC family.

It localises to the cytoplasm. Functionally, involved in the stabilization of the sigma stress factor RpoS. This Salmonella choleraesuis (strain SC-B67) protein is Anti-adapter protein IraM.